The primary structure comprises 228 residues: 7-cyano-7-deazaguanine synthase (228 aa).

ATP is bound at residue 8–18; the sequence is LSGGMDSATTL. Zn(2+)-binding residues include Cys-188, Cys-198, Cys-201, and Cys-204.

It belongs to the QueC family. Requires Zn(2+) as cofactor.

The catalysed reaction is 7-carboxy-7-deazaguanine + NH4(+) + ATP = 7-cyano-7-deazaguanine + ADP + phosphate + H2O + H(+). It participates in purine metabolism; 7-cyano-7-deazaguanine biosynthesis. In terms of biological role, catalyzes the ATP-dependent conversion of 7-carboxy-7-deazaguanine (CDG) to 7-cyano-7-deazaguanine (preQ(0)). The protein is 7-cyano-7-deazaguanine synthase of Nitrosomonas europaea (strain ATCC 19718 / CIP 103999 / KCTC 2705 / NBRC 14298).